A 72-amino-acid polypeptide reads, in one-letter code: Variant surface glycoprotein MITAT 1.1000BC (72 aa).

Residue D50 is the site of GPI-anchor amidated aspartate attachment. Positions 51–72 (GSFLVNKKFALMVYDFVSLLAF) are cleaved as a propeptide — removed in mature form.

Its subcellular location is the cell membrane. Functionally, VSG forms a coat on the surface of the parasite. The trypanosome evades the immune response of the host by expressing a series of antigenically distinct VSGs from an estimated 1000 VSG genes. This is Variant surface glycoprotein MITAT 1.1000BC from Trypanosoma brucei brucei.